The chain runs to 365 residues: 3-dehydroquinate synthase (365 aa).

Residues 106 to 110, 130 to 131, Lys-142, Lys-151, and 169 to 172 contribute to the NAD(+) site; these read GVIGD, TT, and FFAT. The Zn(2+) site is built by Glu-184, His-247, and His-264.

It belongs to the sugar phosphate cyclases superfamily. Dehydroquinate synthase family. It depends on Co(2+) as a cofactor. The cofactor is Zn(2+). NAD(+) is required as a cofactor.

It is found in the cytoplasm. The enzyme catalyses 7-phospho-2-dehydro-3-deoxy-D-arabino-heptonate = 3-dehydroquinate + phosphate. The protein operates within metabolic intermediate biosynthesis; chorismate biosynthesis; chorismate from D-erythrose 4-phosphate and phosphoenolpyruvate: step 2/7. Functionally, catalyzes the conversion of 3-deoxy-D-arabino-heptulosonate 7-phosphate (DAHP) to dehydroquinate (DHQ). This Listeria monocytogenes serotype 4b (strain CLIP80459) protein is 3-dehydroquinate synthase.